The sequence spans 170 residues: Cathelicidin antimicrobial peptide (170 aa).

The N-terminal stretch at 1–30 is a signal peptide; it reads MDTQRDSPSLGRWSLVLLLLGLVMPLAIVA. A propeptide spans 31–131 (cathelin-like domain (CLD)); the sequence is QVLSYQEAVL…DISCDKDNRR (101 aa). 2 disulfides stabilise this stretch: Cys-86–Cys-97 and Cys-108–Cys-125. The segment at 150–162 is active core; the sequence is FKRIVQRIKDFLQ.

The protein belongs to the cathelicidin family. As to quaternary structure, monomer, homodimer or homotrimer (in vitro). Oligomerizes as tetra- or hexamer in solution (in vitro). Post-translationally, proteolytically cleaved by proteinase PRTN3 into antibacterial peptide LL-37. Proteolytically cleaved by cathepsin CTSG and neutrophil elastase ELANE. In terms of processing, resistant to proteolytic degradation in solution, and when bound to both zwitterionic (mimicking mammalian membranes) and negatively charged membranes (mimicking bacterial membranes). After secretion onto the skin surface, the CAMP gene product is processed by a serine protease-dependent mechanism into multiple novel antimicrobial peptides distinct from and shorter than cathelicidin LL-37. These peptides show enhanced antimicrobial action, acquiring the ability to kill skin pathogens such as S.aureus, E.coli and C.albicans. These peptides have lost the ability to stimulate CXCL8/IL8 release from keratinocytes. The peptides act synergistically, killing bacteria at lower concentrations when present together, and maintain activity at increased salt condition.

Its subcellular location is the secreted. The protein resides in the vesicle. Its function is as follows. Antimicrobial protein that is an integral component of the innate immune system. Binds to bacterial lipopolysaccharides (LPS). Acts via neutrophil N-formyl peptide receptors to enhance the release of CXCL2. Postsecretory processing generates multiple cathelicidin antimicrobial peptides with various lengths which act as a topical antimicrobial defense in sweat on skin. The unprocessed precursor form, cathelicidin antimicrobial peptide, inhibits the growth of Gram-negative E.coli and E.aerogenes with efficiencies comparable to that of the mature peptide LL-37 (in vitro). Functionally, antimicrobial peptide that is an integral component of the innate immune system. Binds to bacterial lipopolysaccharides (LPS). Causes membrane permeabilization by forming transmembrane pores (in vitro). Causes lysis of E.coli. Exhibits antimicrobial activity against Gram-negative bacteria such as P.aeruginosa, S.typhimurium, E.aerogenes, E.coli and P.syringae, Gram-positive bacteria such as L.monocytogenes, S.epidermidis, S.pyogenes and S.aureus, as well as vancomycin-resistant enterococci (in vitro). Exhibits antimicrobial activity against methicillin-resistant S.aureus, P.mirabilis, and C.albicans in low-salt media, but not in media containing 100 mM NaCl (in vitro). Forms chiral supramolecular assemblies with quinolone signal (PQS) molecules of P.aeruginosa, which may lead to interference of bacterial quorum signaling and perturbance of bacterial biofilm formation. May form supramolecular fiber-like assemblies on bacterial membranes. Induces cytokine and chemokine producation as well as TNF/TNFA and CSF2/GMCSF production in normal human keratinocytes. Exhibits hemolytic activity against red blood cells. Exhibits antimicrobial activity against E.coli and B.megaterium (in vitro). This chain is Cathelicidin antimicrobial peptide, found in Nomascus leucogenys (Northern white-cheeked gibbon).